The primary structure comprises 182 residues: UPF0316 protein BCG9842_B1857 (182 aa).

Helical transmembrane passes span 6–26, 32–52, and 58–78; these read LIFVLQIIYVPILTIRTILLV, SAAGVGLLEGAIYIVSLGIVF, and WMNIVAYVIGFSTGLLLGGYI.

This sequence belongs to the UPF0316 family.

It localises to the cell membrane. This Bacillus cereus (strain G9842) protein is UPF0316 protein BCG9842_B1857.